The chain runs to 519 residues: 3-octaprenyl-4-hydroxybenzoate carboxy-lyase (519 aa).

Residue Asn-177 participates in Mn(2+) binding. Residues 180 to 182 (IYR), 194 to 196 (RWL), and 199 to 200 (RG) contribute to the prenylated FMN site. Glu-243 is a Mn(2+) binding site. Asp-318 acts as the Proton donor in catalysis.

The protein belongs to the UbiD family. In terms of assembly, homohexamer. Prenylated FMN is required as a cofactor. Mn(2+) serves as cofactor.

It is found in the cell membrane. It catalyses the reaction a 4-hydroxy-3-(all-trans-polyprenyl)benzoate + H(+) = a 2-(all-trans-polyprenyl)phenol + CO2. It functions in the pathway cofactor biosynthesis; ubiquinone biosynthesis. In terms of biological role, catalyzes the decarboxylation of 3-octaprenyl-4-hydroxy benzoate to 2-octaprenylphenol, an intermediate step in ubiquinone biosynthesis. The polypeptide is 3-octaprenyl-4-hydroxybenzoate carboxy-lyase (Burkholderia pseudomallei (strain 1710b)).